A 130-amino-acid polypeptide reads, in one-letter code: Small ribosomal subunit protein uS11 (130 aa).

Belongs to the universal ribosomal protein uS11 family. Part of the 30S ribosomal subunit. Interacts with proteins S7 and S18. Binds to IF-3.

Located on the platform of the 30S subunit, it bridges several disparate RNA helices of the 16S rRNA. Forms part of the Shine-Dalgarno cleft in the 70S ribosome. This chain is Small ribosomal subunit protein uS11, found in Teredinibacter turnerae (strain ATCC 39867 / T7901).